Here is a 276-residue protein sequence, read N- to C-terminus: Exosome complex component Rrp42 (276 aa).

It belongs to the RNase PH family. Rrp42 subfamily. In terms of assembly, component of the archaeal exosome complex. Forms a hexameric ring-like arrangement composed of 3 Rrp41-Rrp42 heterodimers. The hexameric ring associates with a trimer of Rrp4 and/or Csl4 subunits.

Its subcellular location is the cytoplasm. Non-catalytic component of the exosome, which is a complex involved in RNA degradation. Contributes to the structuring of the Rrp41 active site. This is Exosome complex component Rrp42 from Aeropyrum pernix (strain ATCC 700893 / DSM 11879 / JCM 9820 / NBRC 100138 / K1).